Consider the following 263-residue polypeptide: Pyrrolysine synthase (263 aa).

Leu8, Val57, Ile64, and Ala107 together coordinate L-pyrrolysine. Positions 155, 156, 175, 210, 228, 230, and 249 each coordinate NAD(+).

This sequence belongs to the PylD family.

The enzyme catalyses (3R)-3-methyl-D-ornithyl-N(6)-L-lysine + NAD(+) = L-pyrrolysine + NH4(+) + NADH + 2 H(+). It functions in the pathway amino-acid biosynthesis; L-pyrrolysine biosynthesis. Catalyzes the ultimate step of the pyrrolysine biosynthesis pathway by converting the isopeptide (3R)-3-methyl-D-ornithyl-N(6)-L-lysine to the 22nd proteinogenic amino acid. Is able to use surrogate substrates such as (3R)-D-ornithyl-N(6)-L-lysine in vitro. This chain is Pyrrolysine synthase, found in Methanosarcina barkeri (strain Fusaro / DSM 804).